Reading from the N-terminus, the 309-residue chain is Verprolin (309 aa).

Positions 1-13 are enriched in pro residues; it reads MAPAPPPPPPAPA. A disordered region spans residues 1-273; sequence MAPAPPPPPP…PNRVDDHGRF (273 aa). The WH2 domain occupies 27 to 44; the sequence is DRSALLNSIQKGKKLKKA. Residues 82–91 are compositionally biased toward polar residues; sequence LPTSSNNTQQ. The span at 141-207 shows a compositional bias: pro residues; it reads TSAPPRPSIP…PPKVPPPPLS (67 aa).

This sequence belongs to the verprolin family. As to quaternary structure, interacts with wsp1. Interacts with myo1 (via SH3 domain). Interacts with actin monomers.

The protein localises to the cytoplasm. It is found in the cytoskeleton. Involved in cytoskeletal organization and cellular growth. May exert its effects on the cytoskeleton directly, or indirectly via proline-binding proteins such as profilin or proteins possessing SH3 domains. Plays a role in actin patch assembly by enhancing the ability of myo1 to stimulate actin polymerization by the Arp2/3 complex. This chain is Verprolin, found in Schizosaccharomyces pombe (strain 972 / ATCC 24843) (Fission yeast).